The chain runs to 248 residues: 3-oxoacyl-[acyl-carrier-protein] reductase FabG (248 aa).

NADP(+)-binding positions include 14–17, 65–66, and Asn92; these read GGSR and DV. Residue Ser144 participates in substrate binding. The Proton acceptor role is filled by Tyr157. NADP(+) is bound by residues 157–161 and Ile190; that span reads YAAAK.

The protein belongs to the short-chain dehydrogenases/reductases (SDR) family. As to quaternary structure, homotetramer.

The catalysed reaction is a (3R)-hydroxyacyl-[ACP] + NADP(+) = a 3-oxoacyl-[ACP] + NADPH + H(+). It functions in the pathway lipid metabolism; fatty acid biosynthesis. In terms of biological role, catalyzes the NADPH-dependent reduction of beta-ketoacyl-ACP substrates to beta-hydroxyacyl-ACP products, the first reductive step in the elongation cycle of fatty acid biosynthesis. In Chlamydia trachomatis serovar D (strain ATCC VR-885 / DSM 19411 / UW-3/Cx), this protein is 3-oxoacyl-[acyl-carrier-protein] reductase FabG (fabG).